The primary structure comprises 427 residues: Enolase (427 aa).

Gln-163 contributes to the (2R)-2-phosphoglycerate binding site. Glu-205 functions as the Proton donor in the catalytic mechanism. Mg(2+)-binding residues include Asp-242, Glu-285, and Asp-312. (2R)-2-phosphoglycerate contacts are provided by Lys-337, Arg-366, Ser-367, and Lys-388. Lys-337 serves as the catalytic Proton acceptor.

The protein belongs to the enolase family. The cofactor is Mg(2+).

Its subcellular location is the cytoplasm. It localises to the secreted. It is found in the cell surface. It carries out the reaction (2R)-2-phosphoglycerate = phosphoenolpyruvate + H2O. Its pathway is carbohydrate degradation; glycolysis; pyruvate from D-glyceraldehyde 3-phosphate: step 4/5. Catalyzes the reversible conversion of 2-phosphoglycerate (2-PG) into phosphoenolpyruvate (PEP). It is essential for the degradation of carbohydrates via glycolysis. The polypeptide is Enolase (Variovorax paradoxus (strain S110)).